The primary structure comprises 298 residues: Protoheme IX farnesyltransferase 1 (298 aa).

9 helical membrane-spanning segments follow: residues Gln21 to Phe41, Ser43 to Ala63, Lys94 to Phe114, Leu118 to Leu138, Tyr144 to Val164, Phe168 to Trp188, Thr215 to Phe235, Leu236 to Ile256, and Phe274 to Ile294.

It belongs to the UbiA prenyltransferase family. Protoheme IX farnesyltransferase subfamily.

It localises to the cell membrane. It carries out the reaction heme b + (2E,6E)-farnesyl diphosphate + H2O = Fe(II)-heme o + diphosphate. It participates in porphyrin-containing compound metabolism; heme O biosynthesis; heme O from protoheme: step 1/1. Functionally, converts heme B (protoheme IX) to heme O by substitution of the vinyl group on carbon 2 of heme B porphyrin ring with a hydroxyethyl farnesyl side group. The polypeptide is Protoheme IX farnesyltransferase 1 (Picrophilus torridus (strain ATCC 700027 / DSM 9790 / JCM 10055 / NBRC 100828 / KAW 2/3)).